A 258-amino-acid polypeptide reads, in one-letter code: Tryptophan synthase alpha chain (258 aa).

Residues glutamate 52 and aspartate 63 each act as proton acceptor in the active site.

This sequence belongs to the TrpA family. Tetramer of two alpha and two beta chains.

The catalysed reaction is (1S,2R)-1-C-(indol-3-yl)glycerol 3-phosphate + L-serine = D-glyceraldehyde 3-phosphate + L-tryptophan + H2O. It functions in the pathway amino-acid biosynthesis; L-tryptophan biosynthesis; L-tryptophan from chorismate: step 5/5. Its function is as follows. The alpha subunit is responsible for the aldol cleavage of indoleglycerol phosphate to indole and glyceraldehyde 3-phosphate. The chain is Tryptophan synthase alpha chain from Streptococcus pneumoniae (strain JJA).